Reading from the N-terminus, the 334-residue chain is Glutamyl-tRNA reductase (334 aa).

Substrate is bound by residues 49 to 52 (TCNR), Ser-107, 112 to 114 (EDQ), and Gln-118. Cys-50 (nucleophile) is an active-site residue. 186–191 (GNGEMG) is an NADP(+) binding site.

This sequence belongs to the glutamyl-tRNA reductase family. In terms of assembly, homodimer.

The enzyme catalyses (S)-4-amino-5-oxopentanoate + tRNA(Glu) + NADP(+) = L-glutamyl-tRNA(Glu) + NADPH + H(+). It participates in porphyrin-containing compound metabolism; protoporphyrin-IX biosynthesis; 5-aminolevulinate from L-glutamyl-tRNA(Glu): step 1/2. In terms of biological role, catalyzes the NADPH-dependent reduction of glutamyl-tRNA(Glu) to glutamate 1-semialdehyde (GSA). This chain is Glutamyl-tRNA reductase, found in Alkaliphilus oremlandii (strain OhILAs) (Clostridium oremlandii (strain OhILAs)).